A 322-amino-acid polypeptide reads, in one-letter code: Crystallin J1B (322 aa).

This sequence belongs to the ADP-ribosylglycohydrolase family. J1 crystallin subfamily. Expressed in the rhopalia. Present in both the large and small eyes.

The sequence is that of Crystallin J1B from Tripedalia cystophora (Jellyfish).